Here is an 85-residue protein sequence, read N- to C-terminus: SPbeta prophage-derived uncharacterized protein YoqG (85 aa).

The chain is SPbeta prophage-derived uncharacterized protein YoqG (yoqG) from Bacillus subtilis (strain 168).